Here is a 145-residue protein sequence, read N- to C-terminus: Large ribosomal subunit protein uL11 (145 aa).

It belongs to the universal ribosomal protein uL11 family. As to quaternary structure, part of the ribosomal stalk of the 50S ribosomal subunit. Interacts with L10 and the large rRNA to form the base of the stalk. L10 forms an elongated spine to which L12 dimers bind in a sequential fashion forming a multimeric L10(L12)X complex. One or more lysine residues are methylated.

Forms part of the ribosomal stalk which helps the ribosome interact with GTP-bound translation factors. In Flavobacterium johnsoniae (strain ATCC 17061 / DSM 2064 / JCM 8514 / BCRC 14874 / CCUG 350202 / NBRC 14942 / NCIMB 11054 / UW101) (Cytophaga johnsonae), this protein is Large ribosomal subunit protein uL11.